Here is a 391-residue protein sequence, read N- to C-terminus: 5-amino-6-(D-ribitylamino)uracil--L-tyrosine 4-hydroxyphenyl transferase (391 aa).

The Radical SAM core domain maps to 55-302 (VTYVINRNIN…GAVARIYLGN (248 aa)). [4Fe-4S] cluster is bound by residues cysteine 69, cysteine 73, and cysteine 76.

Belongs to the radical SAM superfamily. CofH family. In terms of assembly, consists of two subunits, CofG and CofH. Requires [4Fe-4S] cluster as cofactor.

It carries out the reaction 5-amino-6-(D-ribitylamino)uracil + L-tyrosine + S-adenosyl-L-methionine = 5-amino-5-(4-hydroxybenzyl)-6-(D-ribitylimino)-5,6-dihydrouracil + 2-iminoacetate + 5'-deoxyadenosine + L-methionine + H(+). Its pathway is cofactor biosynthesis; coenzyme F0 biosynthesis. In terms of biological role, catalyzes the radical-mediated synthesis of 5-amino-5-(4-hydroxybenzyl)-6-(D-ribitylimino)-5,6-dihydrouracil from 5-amino-6-(D-ribitylamino)uracil and L-tyrosine. This chain is 5-amino-6-(D-ribitylamino)uracil--L-tyrosine 4-hydroxyphenyl transferase, found in Nostoc sp. (strain PCC 7120 / SAG 25.82 / UTEX 2576).